The chain runs to 185 residues: Threonylcarbamoyl-AMP synthase (185 aa).

The region spanning 4-185 is the YrdC-like domain; it reads SFRAQCAARV…LVTGQVIRPA (182 aa).

Belongs to the SUA5 family. TsaC subfamily.

The protein resides in the cytoplasm. The enzyme catalyses L-threonine + hydrogencarbonate + ATP = L-threonylcarbamoyladenylate + diphosphate + H2O. Required for the formation of a threonylcarbamoyl group on adenosine at position 37 (t(6)A37) in tRNAs that read codons beginning with adenine. Catalyzes the conversion of L-threonine, HCO(3)(-)/CO(2) and ATP to give threonylcarbamoyl-AMP (TC-AMP) as the acyladenylate intermediate, with the release of diphosphate. This chain is Threonylcarbamoyl-AMP synthase, found in Pseudomonas paraeruginosa (strain DSM 24068 / PA7) (Pseudomonas aeruginosa (strain PA7)).